A 241-amino-acid chain; its full sequence is Zinc finger CCHC domain-containing protein 24 (241 aa).

Phosphoserine occurs at positions 65 and 93. Residues 132 to 149 (YLCHLCFNKGHYIKDCPQ) form a CCHC-type zinc finger.

This chain is Zinc finger CCHC domain-containing protein 24 (ZCCHC24), found in Homo sapiens (Human).